The chain runs to 367 residues: DNA replication and repair protein RecF (367 aa).

30–37 (GANGSGKT) lines the ATP pocket.

The protein belongs to the RecF family.

It is found in the cytoplasm. Its function is as follows. The RecF protein is involved in DNA metabolism; it is required for DNA replication and normal SOS inducibility. RecF binds preferentially to single-stranded, linear DNA. It also seems to bind ATP. The polypeptide is DNA replication and repair protein RecF (Pseudomonas syringae pv. syringae (strain B728a)).